The sequence spans 457 residues: Toxin and drug export protein A (457 aa).

An N-terminal signal peptide occupies residues 1-23; sequence MFTIKKLTLTIVVATTLTGCANI.

This sequence belongs to the outer membrane factor (OMF) (TC 1.B.17) family. In terms of assembly, homotrimer. Probably part of a complex composed of LtxB, LtxD and TdeA, which forms a single transport channel across the two membranes.

The protein resides in the cell outer membrane. Functionally, required for secretion of the LtxA leukotoxin and resistance to various antimicrobial compounds. The protein is Toxin and drug export protein A of Aggregatibacter actinomycetemcomitans (Actinobacillus actinomycetemcomitans).